Consider the following 60-residue polypeptide: Toxin S4C8 (60 aa).

4 cysteine pairs are disulfide-bonded: C3/C22, C17/C39, C41/C52, and C53/C58. Residues 41-48 (CPTAMWPY) are important for binding to L-type calcium channels.

It belongs to the three-finger toxin family. Short-chain subfamily. L-type calcium blocker sub-subfamily. As to expression, expressed by the venom gland.

It localises to the secreted. Its function is as follows. This specific blocker of the L-type calcium channel (Cav1/CACNA1) is a smooth muscle relaxant and an inhibitor of cardiac contractions. This chain is Toxin S4C8, found in Dendroaspis jamesoni kaimosae (Eastern Jameson's mamba).